Reading from the N-terminus, the 383-residue chain is F-box/kelch-repeat protein At4g19330 (383 aa).

The segment at 1–27 (MAYLSFKSNMERTPRESNTPCPPPQPS) is disordered. One can recognise an F-box domain in the interval 28-79 (PSLFSSLPDDIVLNILARISTSYYQTLSLVSKTFRLLILSKELDMERSYLGT). 3 Kelch repeats span residues 147–192 (ETYE…VLDG), 193–239 (KLYV…NIQT), and 272–318 (STCE…SEIG).

Its function is as follows. Involved in seed germination. The chain is F-box/kelch-repeat protein At4g19330 from Arabidopsis thaliana (Mouse-ear cress).